A 277-amino-acid polypeptide reads, in one-letter code: Thiazole synthase (277 aa).

K118 acts as the Schiff-base intermediate with DXP in catalysis. 1-deoxy-D-xylulose 5-phosphate-binding positions include G179, 205 to 206 (AG), and 227 to 228 (NT).

It belongs to the ThiG family. As to quaternary structure, homotetramer. Forms heterodimers with either ThiH or ThiS.

The protein resides in the plastid. The protein localises to the chloroplast. It catalyses the reaction [ThiS sulfur-carrier protein]-C-terminal-Gly-aminoethanethioate + 2-iminoacetate + 1-deoxy-D-xylulose 5-phosphate = [ThiS sulfur-carrier protein]-C-terminal Gly-Gly + 2-[(2R,5Z)-2-carboxy-4-methylthiazol-5(2H)-ylidene]ethyl phosphate + 2 H2O + H(+). It participates in cofactor biosynthesis; thiamine diphosphate biosynthesis. Functionally, catalyzes the rearrangement of 1-deoxy-D-xylulose 5-phosphate (DXP) to produce the thiazole phosphate moiety of thiamine. Sulfur is provided by the thiocarboxylate moiety of the carrier protein ThiS. In vitro, sulfur can be provided by H(2)S. This is Thiazole synthase from Emiliania huxleyi (Coccolithophore).